The chain runs to 280 residues: Pantothenate synthetase (280 aa).

Position 30–37 (30–37 (MGALHRGH)) interacts with ATP. The active-site Proton donor is the histidine 37. (R)-pantoate is bound at residue glutamine 61. Residue glutamine 61 participates in beta-alanine binding. 148 to 151 (GEKD) contacts ATP. Position 154 (glutamine 154) interacts with (R)-pantoate. ATP is bound by residues valine 177 and 185–188 (LSSR).

Belongs to the pantothenate synthetase family. Homodimer.

It is found in the cytoplasm. It carries out the reaction (R)-pantoate + beta-alanine + ATP = (R)-pantothenate + AMP + diphosphate + H(+). The protein operates within cofactor biosynthesis; (R)-pantothenate biosynthesis; (R)-pantothenate from (R)-pantoate and beta-alanine: step 1/1. Functionally, catalyzes the condensation of pantoate with beta-alanine in an ATP-dependent reaction via a pantoyl-adenylate intermediate. This is Pantothenate synthetase from Azobacteroides pseudotrichonymphae genomovar. CFP2.